The chain runs to 217 residues: Ras-related protein Rab11B (217 aa).

Residue 21-28 (GDSGVGKS) coordinates GTP. The short motif at 43-51 (SKSTIGVEF) is the Effector region element. Residues 69–73 (DTAGQ) and 127–130 (NKAD) contribute to the GTP site. S-geranylgeranyl cysteine attachment occurs at residues cysteine 214 and cysteine 215.

This sequence belongs to the small GTPase superfamily. Rab family.

The protein localises to the cell membrane. The sequence is that of Ras-related protein Rab11B (RAB11B) from Nicotiana tabacum (Common tobacco).